The primary structure comprises 226 residues: Probable thiol methyltransferase 2 (226 aa).

Residues Trp29, Trp33, Trp40, and Gly67 each contribute to the S-adenosyl-L-methionine site. A Phosphoserine modification is found at Ser79. Residues Asp88, 116–117 (DF), and Tyr132 each bind S-adenosyl-L-methionine.

Belongs to the class I-like SAM-binding methyltransferase superfamily. TPMT family.

The catalysed reaction is a thiol + S-adenosyl-L-methionine = a methyl thioether + S-adenosyl-L-homocysteine + H(+). Functionally, S-adenosyl-L-methionine-dependent methyltransferase. This chain is Probable thiol methyltransferase 2 (HOL3), found in Arabidopsis thaliana (Mouse-ear cress).